The primary structure comprises 300 residues: 33 kDa chaperonin (300 aa).

2 disulfides stabilise this stretch: cysteine 235-cysteine 237 and cysteine 269-cysteine 272.

This sequence belongs to the HSP33 family. Post-translationally, under oxidizing conditions two disulfide bonds are formed involving the reactive cysteines. Under reducing conditions zinc is bound to the reactive cysteines and the protein is inactive.

It is found in the cytoplasm. Functionally, redox regulated molecular chaperone. Protects both thermally unfolding and oxidatively damaged proteins from irreversible aggregation. Plays an important role in the bacterial defense system toward oxidative stress. The polypeptide is 33 kDa chaperonin (Pseudomonas fluorescens (strain Pf0-1)).